Consider the following 129-residue polypeptide: uncharacterized protein (129 aa).

Residues 85 to 108 (SSAADSDDSSSCSECDSDALLSDD) are compositionally biased toward low complexity. The disordered stretch occupies residues 85 to 110 (SSAADSDDSSSCSECDSDALLSDDGP).

This is an uncharacterized protein from Microplitis demolitor (Parasitoid wasp).